The following is a 293-amino-acid chain: Elongation factor Ts (293 aa).

The tract at residues 80-83 (TDFV) is involved in Mg(2+) ion dislocation from EF-Tu.

Belongs to the EF-Ts family.

Its subcellular location is the cytoplasm. Associates with the EF-Tu.GDP complex and induces the exchange of GDP to GTP. It remains bound to the aminoacyl-tRNA.EF-Tu.GTP complex up to the GTP hydrolysis stage on the ribosome. The polypeptide is Elongation factor Ts (Staphylococcus aureus (strain Newman)).